The primary structure comprises 342 residues: N-acetyl-gamma-glutamyl-phosphate reductase (342 aa).

Cysteine 146 is an active-site residue.

This sequence belongs to the NAGSA dehydrogenase family. Type 1 subfamily.

It is found in the cytoplasm. It carries out the reaction N-acetyl-L-glutamate 5-semialdehyde + phosphate + NADP(+) = N-acetyl-L-glutamyl 5-phosphate + NADPH + H(+). Its pathway is amino-acid biosynthesis; L-arginine biosynthesis; N(2)-acetyl-L-ornithine from L-glutamate: step 3/4. Functionally, catalyzes the NADPH-dependent reduction of N-acetyl-5-glutamyl phosphate to yield N-acetyl-L-glutamate 5-semialdehyde. This chain is N-acetyl-gamma-glutamyl-phosphate reductase, found in Saccharopolyspora erythraea (strain ATCC 11635 / DSM 40517 / JCM 4748 / NBRC 13426 / NCIMB 8594 / NRRL 2338).